A 194-amino-acid chain; its full sequence is dITP/XTP pyrophosphatase (194 aa).

Residue 11 to 16 (SHNAGK) participates in substrate binding. Asp70 serves as the catalytic Proton acceptor. Asp70 lines the Mg(2+) pocket. Substrate contacts are provided by residues Ser71, 149–152 (FGYD), Lys172, and 177–178 (HR).

It belongs to the HAM1 NTPase family. Homodimer. The cofactor is Mg(2+).

It carries out the reaction XTP + H2O = XMP + diphosphate + H(+). It catalyses the reaction dITP + H2O = dIMP + diphosphate + H(+). The enzyme catalyses ITP + H2O = IMP + diphosphate + H(+). Its function is as follows. Pyrophosphatase that catalyzes the hydrolysis of nucleoside triphosphates to their monophosphate derivatives, with a high preference for the non-canonical purine nucleotides XTP (xanthosine triphosphate), dITP (deoxyinosine triphosphate) and ITP. Seems to function as a house-cleaning enzyme that removes non-canonical purine nucleotides from the nucleotide pool, thus preventing their incorporation into DNA/RNA and avoiding chromosomal lesions. The chain is dITP/XTP pyrophosphatase from Thermosynechococcus vestitus (strain NIES-2133 / IAM M-273 / BP-1).